A 118-amino-acid polypeptide reads, in one-letter code: Ribonuclease P protein component (118 aa).

It belongs to the RnpA family. Consists of a catalytic RNA component (M1 or rnpB) and a protein subunit.

It catalyses the reaction Endonucleolytic cleavage of RNA, removing 5'-extranucleotides from tRNA precursor.. Its function is as follows. RNaseP catalyzes the removal of the 5'-leader sequence from pre-tRNA to produce the mature 5'-terminus. It can also cleave other RNA substrates such as 4.5S RNA. The protein component plays an auxiliary but essential role in vivo by binding to the 5'-leader sequence and broadening the substrate specificity of the ribozyme. The sequence is that of Ribonuclease P protein component from Rickettsia peacockii (strain Rustic).